The sequence spans 185 residues: NAD(P)H-quinone oxidoreductase subunit J (185 aa).

This sequence belongs to the complex I 30 kDa subunit family. In terms of assembly, NDH-1 can be composed of about 15 different subunits; different subcomplexes with different compositions have been identified which probably have different functions.

It is found in the cellular thylakoid membrane. The enzyme catalyses a plastoquinone + NADH + (n+1) H(+)(in) = a plastoquinol + NAD(+) + n H(+)(out). It carries out the reaction a plastoquinone + NADPH + (n+1) H(+)(in) = a plastoquinol + NADP(+) + n H(+)(out). Functionally, NDH-1 shuttles electrons from an unknown electron donor, via FMN and iron-sulfur (Fe-S) centers, to quinones in the respiratory and/or the photosynthetic chain. The immediate electron acceptor for the enzyme in this species is believed to be plastoquinone. Couples the redox reaction to proton translocation, and thus conserves the redox energy in a proton gradient. Cyanobacterial NDH-1 also plays a role in inorganic carbon-concentration. The sequence is that of NAD(P)H-quinone oxidoreductase subunit J from Prochlorococcus marinus (strain MIT 9303).